A 1550-amino-acid polypeptide reads, in one-letter code: Pentafunctional AROM polypeptide (1550 aa).

Positions 1–379 are 3-dehydroquinate synthase; it reads MSIERVPILG…YQLKAHQVSK (379 aa). NAD(+) is bound by residues 42 to 44, 80 to 83, 111 to 113, and aspartate 116; these read DTN, ENNK, and GGV. Arginine 127 serves as a coordination point for 7-phospho-2-dehydro-3-deoxy-D-arabino-heptonate. An NAD(+)-binding site is contributed by 136 to 137; that stretch reads TT. The 7-phospho-2-dehydro-3-deoxy-D-arabino-heptonate site is built by aspartate 143 and lysine 149. Residue lysine 158 participates in NAD(+) binding. 7-phospho-2-dehydro-3-deoxy-D-arabino-heptonate is bound at residue asparagine 159. NAD(+)-binding positions include 176-179 and asparagine 187; that span reads FLET. Glutamate 191 serves as a coordination point for Zn(2+). 7-phospho-2-dehydro-3-deoxy-D-arabino-heptonate contacts are provided by residues 191 to 194 and lysine 243; that span reads EVVK. The active-site Proton acceptor; for 3-dehydroquinate synthase activity is glutamate 253. Residues 257-261 and histidine 264 each bind 7-phospho-2-dehydro-3-deoxy-D-arabino-heptonate; that span reads RNLLN. Position 264 (histidine 264) interacts with Zn(2+). The Proton acceptor; for 3-dehydroquinate synthase activity role is filled by histidine 268. 7-phospho-2-dehydro-3-deoxy-D-arabino-heptonate is bound by residues histidine 280 and lysine 351. A Zn(2+)-binding site is contributed by histidine 280. The segment at 392 to 837 is EPSP synthase; that stretch reads VHPFTNPPKE…WDILHSKFKI (446 aa). The interval 857-1047 is shikimate kinase; that stretch reads DKGVIVIGMR…VPTGRSTAVV (191 aa). ATP is bound at residue 864 to 871; the sequence is GMRGTGKS. The 3-dehydroquinase stretch occupies residues 1048–1257; the sequence is LTLPDLNNVA…NDDGLLTIGE (210 aa). Arginine 1193 serves as the catalytic Schiff-base intermediate with substrate; for 3-dehydroquinate dehydratase activity. Residues 1270–1550 are shikimate dehydrogenase; the sequence is AKKFWVIGSP…EIIHRAVVEE (281 aa).

It in the N-terminal section; belongs to the sugar phosphate cyclases superfamily. Dehydroquinate synthase family. In the 2nd section; belongs to the EPSP synthase family. This sequence in the 3rd section; belongs to the shikimate kinase family. The protein in the 4th section; belongs to the type-I 3-dehydroquinase family. It in the C-terminal section; belongs to the shikimate dehydrogenase family. Homodimer. The cofactor is Zn(2+).

Its subcellular location is the cytoplasm. It carries out the reaction 7-phospho-2-dehydro-3-deoxy-D-arabino-heptonate = 3-dehydroquinate + phosphate. It catalyses the reaction 3-dehydroquinate = 3-dehydroshikimate + H2O. The catalysed reaction is shikimate + NADP(+) = 3-dehydroshikimate + NADPH + H(+). The enzyme catalyses shikimate + ATP = 3-phosphoshikimate + ADP + H(+). It carries out the reaction 3-phosphoshikimate + phosphoenolpyruvate = 5-O-(1-carboxyvinyl)-3-phosphoshikimate + phosphate. The protein operates within metabolic intermediate biosynthesis; chorismate biosynthesis; chorismate from D-erythrose 4-phosphate and phosphoenolpyruvate: step 2/7. It functions in the pathway metabolic intermediate biosynthesis; chorismate biosynthesis; chorismate from D-erythrose 4-phosphate and phosphoenolpyruvate: step 3/7. It participates in metabolic intermediate biosynthesis; chorismate biosynthesis; chorismate from D-erythrose 4-phosphate and phosphoenolpyruvate: step 4/7. Its pathway is metabolic intermediate biosynthesis; chorismate biosynthesis; chorismate from D-erythrose 4-phosphate and phosphoenolpyruvate: step 5/7. The protein operates within metabolic intermediate biosynthesis; chorismate biosynthesis; chorismate from D-erythrose 4-phosphate and phosphoenolpyruvate: step 6/7. In terms of biological role, the AROM polypeptide catalyzes 5 consecutive enzymatic reactions in prechorismate polyaromatic amino acid biosynthesis. The chain is Pentafunctional AROM polypeptide from Candida dubliniensis (strain CD36 / ATCC MYA-646 / CBS 7987 / NCPF 3949 / NRRL Y-17841) (Yeast).